The primary structure comprises 355 residues: 3-dehydroquinate synthase (355 aa).

Residues 71-76 (EGEASK), 105-109 (GVVGD), 129-130 (TS), Lys-142, and Lys-151 contribute to the NAD(+) site. Zn(2+)-binding residues include Glu-184, His-246, and His-263.

It belongs to the sugar phosphate cyclases superfamily. Dehydroquinate synthase family. The cofactor is Co(2+). Zn(2+) is required as a cofactor. Requires NAD(+) as cofactor.

The protein resides in the cytoplasm. The catalysed reaction is 7-phospho-2-dehydro-3-deoxy-D-arabino-heptonate = 3-dehydroquinate + phosphate. Its pathway is metabolic intermediate biosynthesis; chorismate biosynthesis; chorismate from D-erythrose 4-phosphate and phosphoenolpyruvate: step 2/7. Functionally, catalyzes the conversion of 3-deoxy-D-arabino-heptulosonate 7-phosphate (DAHP) to dehydroquinate (DHQ). This chain is 3-dehydroquinate synthase, found in Streptococcus thermophilus (strain CNRZ 1066).